Here is an 83-residue protein sequence, read N- to C-terminus: Large ribosomal subunit protein bL27 (83 aa).

Positions M1 to F26 are disordered.

Belongs to the bacterial ribosomal protein bL27 family.

The polypeptide is Large ribosomal subunit protein bL27 (Desulfosudis oleivorans (strain DSM 6200 / JCM 39069 / Hxd3) (Desulfococcus oleovorans)).